Consider the following 192-residue polypeptide: MIDGLIKKEFLAHKEALEKSLESLQEALKQSVHLLIETLENQGKILICGNGGSASDAQHFAAELTGRYKLERKGLSALSLSTDTSALTAIANDYGYEEVFARQVEALGVKNDVLIGISTSGNSKNVLKAYEKAKDLGVKTLSLAGRDGGKMKPLSDMALIVPSDDTPRIQEMHILMIHILCDCIERHFANKN.

The 158-residue stretch at 35–192 (LIETLENQGK…CIERHFANKN (158 aa)) folds into the SIS domain. A substrate-binding site is contributed by 50–52 (NGG). His59 and Glu63 together coordinate Zn(2+). Substrate is bound by residues Glu63, 92-93 (ND), 118-120 (STS), Ser123, and Gln170. The Zn(2+) site is built by Gln170 and His178.

It belongs to the SIS family. GmhA subfamily. In terms of assembly, homotetramer. The cofactor is Zn(2+).

It is found in the cytoplasm. The catalysed reaction is 2 D-sedoheptulose 7-phosphate = D-glycero-alpha-D-manno-heptose 7-phosphate + D-glycero-beta-D-manno-heptose 7-phosphate. The protein operates within carbohydrate biosynthesis; D-glycero-D-manno-heptose 7-phosphate biosynthesis; D-glycero-alpha-D-manno-heptose 7-phosphate and D-glycero-beta-D-manno-heptose 7-phosphate from sedoheptulose 7-phosphate: step 1/1. Its function is as follows. Catalyzes the isomerization of sedoheptulose 7-phosphate in D-glycero-D-manno-heptose 7-phosphate. The protein is Phosphoheptose isomerase of Helicobacter pylori (strain Shi470).